The primary structure comprises 358 residues: Protein-glutamate methylesterase/protein-glutamine glutaminase (358 aa).

The Response regulatory domain maps to 5–122 (SVLIIDDSAL…RNSLEAYTDE (118 aa)). D56 carries the 4-aspartylphosphate modification. The 193-residue stretch at 159-351 (GISTEKLIII…RRILARLVGA (193 aa)) folds into the CheB-type methylesterase domain. Active-site residues include S171, H197, and D293.

Belongs to the CheB family. Post-translationally, phosphorylated by CheA. Phosphorylation of the N-terminal regulatory domain activates the methylesterase activity.

It localises to the cytoplasm. The catalysed reaction is [protein]-L-glutamate 5-O-methyl ester + H2O = L-glutamyl-[protein] + methanol + H(+). It carries out the reaction L-glutaminyl-[protein] + H2O = L-glutamyl-[protein] + NH4(+). Involved in chemotaxis. Part of a chemotaxis signal transduction system that modulates chemotaxis in response to various stimuli. Catalyzes the demethylation of specific methylglutamate residues introduced into the chemoreceptors (methyl-accepting chemotaxis proteins or MCP) by CheR. Also mediates the irreversible deamidation of specific glutamine residues to glutamic acid. The protein is Protein-glutamate methylesterase/protein-glutamine glutaminase of Nitrosomonas europaea (strain ATCC 19718 / CIP 103999 / KCTC 2705 / NBRC 14298).